Reading from the N-terminus, the 253-residue chain is 5-oxoprolinase subunit A (253 aa).

This sequence belongs to the LamB/PxpA family. As to quaternary structure, forms a complex composed of PxpA, PxpB and PxpC.

It carries out the reaction 5-oxo-L-proline + ATP + 2 H2O = L-glutamate + ADP + phosphate + H(+). Functionally, catalyzes the cleavage of 5-oxoproline to form L-glutamate coupled to the hydrolysis of ATP to ADP and inorganic phosphate. The chain is 5-oxoprolinase subunit A from Syntrophobacter fumaroxidans (strain DSM 10017 / MPOB).